A 124-amino-acid chain; its full sequence is Ribonuclease pancreatic (124 aa).

The span at 1 to 13 (KETAAAKFERQHI) shows a compositional bias: basic and acidic residues. The segment at 1–24 (KETAAAKFERQHIDSNPSSVSSSN) is disordered. Substrate contacts are provided by K7 and R10. Residue H12 is the Proton acceptor of the active site. Over residues 15–24 (SNPSSVSSSN) the composition is skewed to low complexity. 4 disulfides stabilise this stretch: C26/C84, C40/C95, C58/C110, and C65/C72. A glycan (N-linked (GlcNAc...) asparagine; partial) is linked at N34. Residues 41-45 (KPVNT), K66, and R85 each bind substrate. H119 acts as the Proton donor in catalysis.

Belongs to the pancreatic ribonuclease family. In terms of assembly, monomer. Interacts with and forms tight 1:1 complexes with RNH1. Dimerization of two such complexes may occur. Interaction with RNH1 inhibits this protein. In terms of tissue distribution, pancreas.

Its subcellular location is the secreted. The enzyme catalyses an [RNA] containing cytidine + H2O = an [RNA]-3'-cytidine-3'-phosphate + a 5'-hydroxy-ribonucleotide-3'-[RNA].. The catalysed reaction is an [RNA] containing uridine + H2O = an [RNA]-3'-uridine-3'-phosphate + a 5'-hydroxy-ribonucleotide-3'-[RNA].. Endonuclease that catalyzes the cleavage of RNA on the 3' side of pyrimidine nucleotides. Acts on single-stranded and double-stranded RNA. This chain is Ribonuclease pancreatic (RNASE1), found in Antilocapra americana (Pronghorn).